A 183-amino-acid polypeptide reads, in one-letter code: Oligoribonuclease (183 aa).

The 164-residue stretch at 10–173 folds into the Exonuclease domain; it reads LIWIDLEMTG…ADIRESIAEL (164 aa). The active site involves Tyr131.

This sequence belongs to the oligoribonuclease family.

It is found in the cytoplasm. In terms of biological role, 3'-to-5' exoribonuclease specific for small oligoribonucleotides. This is Oligoribonuclease from Idiomarina loihiensis (strain ATCC BAA-735 / DSM 15497 / L2-TR).